The following is a 153-amino-acid chain: Endoribonuclease YbeY (153 aa).

The Zn(2+) site is built by histidine 113, histidine 117, and histidine 123.

Belongs to the endoribonuclease YbeY family. The cofactor is Zn(2+).

Its subcellular location is the cytoplasm. Its function is as follows. Single strand-specific metallo-endoribonuclease involved in late-stage 70S ribosome quality control and in maturation of the 3' terminus of the 16S rRNA. The polypeptide is Endoribonuclease YbeY (Aliivibrio fischeri (strain MJ11) (Vibrio fischeri)).